Consider the following 1118-residue polypeptide: Phytochrome 1 (1118 aa).

Residues 1–10 (MSSTRHSYSS) show a composition bias toward low complexity. Residues 1-23 (MSSTRHSYSSGGSGKSKHGRRIA) form a disordered region. In terms of domain architecture, GAF spans 212-391 (DIGLLCDSVV…VFSLQLNMEV (180 aa)). Cys-317 provides a ligand contact to phytochromobilin. 2 consecutive PAS domains span residues 606–677 (VASE…LEGE) and 740–811 (DYKA…TKLM). One can recognise a Histidine kinase domain in the interval 887 to 1110 (YVKEELKKPL…LVTIQFPLAH (224 aa)).

Belongs to the phytochrome family. As to quaternary structure, homodimer. In terms of processing, contains one covalently linked phytochromobilin chromophore.

Its function is as follows. Regulatory photoreceptor which exists in two forms that are reversibly interconvertible by light: the Pr form that absorbs maximally in the red region of the spectrum and the Pfr form that absorbs maximally in the far-red region. Photoconversion of Pr to Pfr induces an array of morphogenic responses, whereas reconversion of Pfr to Pr cancels the induction of those responses. Pfr controls the expression of a number of nuclear genes including those encoding the small subunit of ribulose-bisphosphate carboxylase, chlorophyll A/B binding protein, protochlorophyllide reductase, rRNA, etc. It also controls the expression of its own gene(s) in a negative feedback fashion. This is Phytochrome 1 (PHY1) from Adiantum capillus-veneris (Maidenhair fern).